A 570-amino-acid polypeptide reads, in one-letter code: Adenine deaminase (570 aa).

It belongs to the metallo-dependent hydrolases superfamily. Adenine deaminase family. Mn(2+) is required as a cofactor.

The catalysed reaction is adenine + H2O + H(+) = hypoxanthine + NH4(+). The polypeptide is Adenine deaminase (Petrotoga mobilis (strain DSM 10674 / SJ95)).